A 228-amino-acid chain; its full sequence is uncharacterized protein (228 aa).

Transmembrane regions (helical) follow at residues 14–34 (HTIS…MLLV), 42–62 (VALF…AITL), 130–150 (FIFS…LVGS), 156–176 (FSFD…VLFM), and 192–212 (IVIA…LIAL).

This sequence belongs to the AzlC family.

It is found in the cell membrane. This is an uncharacterized protein from Helicobacter pylori (strain ATCC 700392 / 26695) (Campylobacter pylori).